A 180-amino-acid chain; its full sequence is UPF0227 protein YE1706 (180 aa).

The protein belongs to the UPF0227 family.

This is UPF0227 protein YE1706 from Yersinia enterocolitica serotype O:8 / biotype 1B (strain NCTC 13174 / 8081).